A 308-amino-acid chain; its full sequence is Putative gluconeogenesis factor (308 aa).

It belongs to the gluconeogenesis factor family.

Its subcellular location is the cytoplasm. Functionally, required for morphogenesis under gluconeogenic growth conditions. This is Putative gluconeogenesis factor from Pasteurella multocida (strain Pm70).